The primary structure comprises 215 residues: N-(5'-phosphoribosyl)anthranilate isomerase (215 aa).

Belongs to the TrpF family.

The enzyme catalyses N-(5-phospho-beta-D-ribosyl)anthranilate = 1-(2-carboxyphenylamino)-1-deoxy-D-ribulose 5-phosphate. It participates in amino-acid biosynthesis; L-tryptophan biosynthesis; L-tryptophan from chorismate: step 3/5. The chain is N-(5'-phosphoribosyl)anthranilate isomerase from Ruegeria sp. (strain TM1040) (Silicibacter sp.).